We begin with the raw amino-acid sequence, 163 residues long: ATP synthase subunit b (163 aa).

The propeptide occupies 1–11 (MLWKANVWVLG). The helical transmembrane segment at 16 to 36 (GISGGTIIYQLLMFIILLALL) threads the bilayer.

The protein belongs to the ATPase B chain family. As to quaternary structure, F-type ATPases have 2 components, F(1) - the catalytic core - and F(0) - the membrane proton channel. F(1) has five subunits: alpha(3), beta(3), gamma(1), delta(1), epsilon(1). F(0) has three main subunits: a(1), b(2) and c(10-14). The alpha and beta chains form an alternating ring which encloses part of the gamma chain. F(1) is attached to F(0) by a central stalk formed by the gamma and epsilon chains, while a peripheral stalk is formed by the delta and b chains.

The protein resides in the cell membrane. F(1)F(0) ATP synthase produces ATP from ADP in the presence of a proton or sodium gradient. F-type ATPases consist of two structural domains, F(1) containing the extramembraneous catalytic core and F(0) containing the membrane proton channel, linked together by a central stalk and a peripheral stalk. During catalysis, ATP synthesis in the catalytic domain of F(1) is coupled via a rotary mechanism of the central stalk subunits to proton translocation. Functionally, component of the F(0) channel, it forms part of the peripheral stalk, linking F(1) to F(0). The chain is ATP synthase subunit b from Bacillus sp. (strain PS3).